Consider the following 316-residue polypeptide: ATP synthase gamma chain (316 aa).

It belongs to the ATPase gamma chain family. F-type ATPases have 2 components, CF(1) - the catalytic core - and CF(0) - the membrane proton channel. CF(1) has five subunits: alpha(3), beta(3), gamma(1), delta(1), epsilon(1). CF(0) has three main subunits: a, b and c.

The protein localises to the cellular thylakoid membrane. Its function is as follows. Produces ATP from ADP in the presence of a proton gradient across the membrane. The gamma chain is believed to be important in regulating ATPase activity and the flow of protons through the CF(0) complex. The polypeptide is ATP synthase gamma chain (Prochlorococcus marinus (strain SARG / CCMP1375 / SS120)).